The following is a 170-amino-acid chain: Shikimate kinase (170 aa).

11–16 (GAGKTT) is a binding site for ATP. Thr-15 is a binding site for Mg(2+). Positions 33, 57, and 80 each coordinate substrate. Arg-119 contributes to the ATP binding site. Arg-141 serves as a coordination point for substrate.

The protein belongs to the shikimate kinase family. In terms of assembly, monomer. Mg(2+) serves as cofactor.

It localises to the cytoplasm. The enzyme catalyses shikimate + ATP = 3-phosphoshikimate + ADP + H(+). Its pathway is metabolic intermediate biosynthesis; chorismate biosynthesis; chorismate from D-erythrose 4-phosphate and phosphoenolpyruvate: step 5/7. Functionally, catalyzes the specific phosphorylation of the 3-hydroxyl group of shikimic acid using ATP as a cosubstrate. The chain is Shikimate kinase from Azobacteroides pseudotrichonymphae genomovar. CFP2.